Reading from the N-terminus, the 284-residue chain is Probable palmitoyltransferase ZDHHC24 (284 aa).

Residues 1–18 (MGEPWAARGTEGAPARMP) are Cytoplasmic-facing. A helical membrane pass occupies residues 19–39 (VVFTALWAAVVVLELTYVMVL). Residues 40 to 52 (GPGPPPLEPLARA) lie on the Extracellular side of the membrane. Residues 53–73 (LQLALAAYQLLNLLGNMGLFL) traverse the membrane as a helical segment. The Cytoplasmic portion of the chain corresponds to 74–137 (RSDPSIRGVM…GRCVGFHNYR (64 aa)). Residues 94–144 (AYCYQCQSQVPPRSGHCSACRVCILRRDHHCRLLGRCVGFHNYRPFLCLLL) form the DHHC domain. Catalysis depends on Cys-124, which acts as the S-palmitoyl cysteine intermediate. The helical transmembrane segment at 138–158 (PFLCLLLHAAGVLLHISVLLS) threads the bilayer. Topologically, residues 159-166 (PALSALLQ) are extracellular. The chain crosses the membrane as a helical span at residues 167 to 187 (AHSALYTVALLLLPWLMLLTG). At 188–195 (KVSLAQFA) the chain is on the cytoplasmic side. Residues 196–216 (LAFVVDTCVAGALLCGAGLLF) form a helical membrane-spanning segment. Residues 217–284 (HGMLLLRGQT…TPTDVGLVTS (68 aa)) are Extracellular-facing.

Belongs to the DHHC palmitoyltransferase family.

Its subcellular location is the membrane. The enzyme catalyses L-cysteinyl-[protein] + hexadecanoyl-CoA = S-hexadecanoyl-L-cysteinyl-[protein] + CoA. Probable palmitoyltransferase that could catalyze the addition of palmitate onto various protein substrates. The sequence is that of Probable palmitoyltransferase ZDHHC24 (Zdhhc24) from Rattus norvegicus (Rat).